Consider the following 549-residue polypeptide: Oxygen-dependent choline dehydrogenase (549 aa).

4–33 lines the FAD pocket; it reads DFVIIGSGSAGSALAYRLSEDGANSVVVLE. H465 acts as the Proton acceptor in catalysis.

It belongs to the GMC oxidoreductase family. The cofactor is FAD.

The catalysed reaction is choline + A = betaine aldehyde + AH2. It carries out the reaction betaine aldehyde + NAD(+) + H2O = glycine betaine + NADH + 2 H(+). Its pathway is amine and polyamine biosynthesis; betaine biosynthesis via choline pathway; betaine aldehyde from choline (cytochrome c reductase route): step 1/1. In terms of biological role, involved in the biosynthesis of the osmoprotectant glycine betaine. Catalyzes the oxidation of choline to betaine aldehyde and betaine aldehyde to glycine betaine at the same rate. This chain is Oxygen-dependent choline dehydrogenase, found in Sinorhizobium medicae (strain WSM419) (Ensifer medicae).